A 306-amino-acid chain; its full sequence is MAAVDDLQFEEFGDGATLLAANPDATTINIEDPSVSFKHQPRPPGSLGREEDEELLGTNDSDETELLAGQKKSSPFWTFEYYQTFFDVDTYQVFDRIKGSLLPVPGKNFVRLYIRSNPDLYGPFWICATLVFAIAISGNLSNFLIHLGEKTYHYVPEFQKVSIAATVIYAYAWLVPLALWGFLLWRNSKVMNIVSYSFLEIVCVYGYSLFIYIPTAVLWIIPQRVIRWVLVTIALGISGSVLAMTFWPAVREDNRRVALATIVTIMLLHVLLSVGCLAYFFDAPEMDHLPAAITTPNQTVAAAKSS.

Residues 1–119 lie on the Cytoplasmic side of the membrane; that stretch reads MAAVDDLQFE…VRLYIRSNPD (119 aa). The disordered stretch occupies residues 33–59; it reads PSVSFKHQPRPPGSLGREEDEELLGTN. Residues 50–59 are compositionally biased toward acidic residues; sequence EEDEELLGTN. A helical membrane pass occupies residues 120-140; the sequence is LYGPFWICATLVFAIAISGNL. Residues 141-162 lie on the Lumenal side of the membrane; that stretch reads SNFLIHLGEKTYHYVPEFQKVS. A helical membrane pass occupies residues 163–183; that stretch reads IAATVIYAYAWLVPLALWGFL. Topologically, residues 184-200 are cytoplasmic; the sequence is LWRNSKVMNIVSYSFLE. The helical transmembrane segment at 201–221 threads the bilayer; the sequence is IVCVYGYSLFIYIPTAVLWII. The Lumenal portion of the chain corresponds to 222 to 227; sequence PQRVIR. Residues 228–248 traverse the membrane as a helical segment; that stretch reads WVLVTIALGISGSVLAMTFWP. Residues 249 to 256 are Cytoplasmic-facing; that stretch reads AVREDNRR. Residues 257 to 277 form a helical membrane-spanning segment; that stretch reads VALATIVTIMLLHVLLSVGCL. Topologically, residues 278–306 are lumenal; it reads AYFFDAPEMDHLPAAITTPNQTVAAAKSS. A glycan (N-linked (GlcNAc...) asparagine) is linked at Asn297.

The protein belongs to the YIP1 family. Interacts with YIPF6; this interaction may stabilize YIPF1. May also form a ternary complex with YIPF2 and YIPF6.

It localises to the golgi apparatus. Its subcellular location is the cis-Golgi network membrane. It is found in the trans-Golgi network membrane. The protein localises to the late endosome membrane. The protein is Protein YIPF1 (Yipf1) of Rattus norvegicus (Rat).